Reading from the N-terminus, the 150-residue chain is UPF0178 protein PBPRA1738 (150 aa).

The protein belongs to the UPF0178 family.

The sequence is that of UPF0178 protein PBPRA1738 from Photobacterium profundum (strain SS9).